The following is a 213-amino-acid chain: Guanylate kinase (213 aa).

Residues 12–190 (GLCLVVAAPS…AIDQVRTILH (179 aa)) enclose the Guanylate kinase-like domain. An ATP-binding site is contributed by 19–26 (APSGAGKS).

It belongs to the guanylate kinase family.

Its subcellular location is the cytoplasm. The catalysed reaction is GMP + ATP = GDP + ADP. In terms of biological role, essential for recycling GMP and indirectly, cGMP. This chain is Guanylate kinase, found in Granulibacter bethesdensis (strain ATCC BAA-1260 / CGDNIH1).